The chain runs to 402 residues: Leucine aminopeptidase 1 (402 aa).

A signal peptide spans 1–18; that stretch reads MKISNASLLALLLPAASA. The propeptide occupies 19 to 92; it reads RFVEQAEQNR…GTFNKRPYKK (74 aa). N-linked (GlcNAc...) asparagine glycosylation is found at Asn111 and Asn184. Zn(2+) is bound by residues His192, Asp211, Glu250, and Asp277. N-linked (GlcNAc...) asparagine glycosylation is present at Asn304. An intrachain disulfide couples Cys326 to Cys330. Residue His359 participates in Zn(2+) binding.

This sequence belongs to the peptidase M28 family. M28E subfamily. Monomer. The cofactor is Zn(2+).

It localises to the secreted. In terms of biological role, extracellular aminopeptidase that allows assimilation of proteinaceous substrates. This is Leucine aminopeptidase 1 (lap1) from Neurospora crassa (strain ATCC 24698 / 74-OR23-1A / CBS 708.71 / DSM 1257 / FGSC 987).